Reading from the N-terminus, the 160-residue chain is MKKSIFSKKLLVSFGSLVALASIPLIAISCGQTNTDKSQQPGSGSSTSGDQSGTTTGGHSGSGTSTSGGQSGTTSGSGTTTGEQTETAPKSPESGSQEATPKSPESGSQEATPKSPESGSQEAAPKSSESGSQEAAPKSSESGSQEAAPKSSESGSQKTT.

A signal peptide spans 1-29 (MKKSIFSKKLLVSFGSLVALASIPLIAIS). Cys-30 is lipidated: N-palmitoyl cysteine. Cys-30 carries S-diacylglycerol cysteine lipidation. Positions 32-160 (QTNTDKSQQP…SSESGSQKTT (129 aa)) are disordered. 2 stretches are compositionally biased toward low complexity: residues 38–54 (SQQP…QSGT) and 62–87 (SGTS…QTET). 6 tandem repeats follow at residues 86–97 (ETAPKSPESGSQ), 98–109 (EATPKSPESGSQ), 110–121 (EATPKSPESGSQ), 122–133 (EAAPKSSESGSQ), 134–145 (EAAPKSSESGSQ), and 146–157 (EAAPKSSESGSQ). Residues 86 to 157 (ETAPKSPESG…APKSSESGSQ (72 aa)) are 6 X 12 AA tandem repeats. A compositionally biased stretch (polar residues) spans 93-160 (ESGSQEATPK…SSESGSQKTT (68 aa)).

It is found in the cell membrane. Its function is as follows. Responsible for the antigenic diversity for host adaptation. In Mesomycoplasma hyorhinis (Mycoplasma hyorhinis), this protein is Variant surface antigen C (vlpC).